A 500-amino-acid chain; its full sequence is Apolipoprotein N-acyltransferase (500 aa).

Helical transmembrane passes span 5-25 (VAPFAAWFLAWIALAPLWIFV), 38-58 (LLLLGLTWGIGYHGVALFWIT), 74-94 (LAITIFCWSFISFYGGLFGAI), 111-131 (ILIGTAMWCVLESLWSAGPLW), 145-165 (AILHLGQISGPNLVTAAIVSV), and 185-205 (LAIATGLLITLHLIGFGLYTA). The 248-residue stretch at 215 to 462 (LKVGIVQGNI…ETIYRRQTQN (248 aa)) folds into the CN hydrolase domain. The Proton acceptor role is filled by E261. K318 is a catalytic residue. C369 acts as the Nucleophile in catalysis. A helical transmembrane segment spans residues 469-489 (DWFTPLLVGLSFLGWSLNIFW).

This sequence belongs to the CN hydrolase family. Apolipoprotein N-acyltransferase subfamily.

Its subcellular location is the cell inner membrane. The catalysed reaction is N-terminal S-1,2-diacyl-sn-glyceryl-L-cysteinyl-[lipoprotein] + a glycerophospholipid = N-acyl-S-1,2-diacyl-sn-glyceryl-L-cysteinyl-[lipoprotein] + a 2-acyl-sn-glycero-3-phospholipid + H(+). It functions in the pathway protein modification; lipoprotein biosynthesis (N-acyl transfer). Functionally, catalyzes the phospholipid dependent N-acylation of the N-terminal cysteine of apolipoprotein, the last step in lipoprotein maturation. In Nostoc sp. (strain PCC 7120 / SAG 25.82 / UTEX 2576), this protein is Apolipoprotein N-acyltransferase.